A 441-amino-acid chain; its full sequence is MKMVPRLAVRAWPLCGLLLAALGCVCASGPRTLVLLDNLNVRDTHSLFFRSLKDRGFELTFKTADDPSLSLIKYGEFLYDNLIIFSPSVEDFGGNINVETISAFIDGGGSVLVAASSDIGDPLRELGSECGIEFDEEKTAVIDHHNYDVSDLGQHTLIVADTENLLKAPTIVGKSSLNPILFRGVGMVADPDNPLVLDILTGSSTSYSFFPDKPITQYPHAVGRNTLLIAGLQARNNARVIFSGSLDFFSDAFFNSAVQKAAPGAQRYSQTGNYELAVALSRWVFKEEGVLRVGPVSHHRVGETAPPNAYTVTDLVEYSIVIEQLSNGKWVPFDGDDIQLEFVRIDPFVRTFLKRKGGKYSVQFKLPDVYGVFQFKVDYNRLGYTHLYSSTQVSVRPLQHTQYERFIPSAYPYYASAFSMMAGLFLFSVVFLHMKEKEKSD.

Positions 1–28 are cleaved as a signal peptide; sequence MKMVPRLAVRAWPLCGLLLAALGCVCAS. Residues 29–412 lie on the Lumenal side of the membrane; the sequence is GPRTLVLLDN…YERFIPSAYP (384 aa). Residues 413-432 traverse the membrane as a helical segment; sequence YYASAFSMMAGLFLFSVVFL. Topologically, residues 433-441 are cytoplasmic; it reads HMKEKEKSD.

This sequence belongs to the DDOST 48 kDa subunit family. Component of the oligosaccharyltransferase (OST) complex. OST exists in two different complex forms which contain common core subunits RPN1, RPN2, OST48, OST4, DAD1 and TMEM258, either STT3A or STT3B as catalytic subunits, and form-specific accessory subunits. STT3A complex assembly occurs through the formation of 3 subcomplexes. Subcomplex 1 contains RPN1 and TMEM258, subcomplex 2 contains the STT3A-specific subunits STT3A, DC2/OSTC, and KCP2 as well as the core subunit OST4, and subcomplex 3 contains RPN2, DAD1, and OST48. The STT3A complex can form stable complexes with the Sec61 complex or with both the Sec61 and TRAP complexes. Interacts with SMIM22.

The protein localises to the endoplasmic reticulum membrane. The protein operates within protein modification; protein glycosylation. Its function is as follows. Subunit of the oligosaccharyl transferase (OST) complex that catalyzes the initial transfer of a defined glycan (Glc(3)Man(9)GlcNAc(2) in eukaryotes) from the lipid carrier dolichol-pyrophosphate to an asparagine residue within an Asn-X-Ser/Thr consensus motif in nascent polypeptide chains, the first step in protein N-glycosylation. N-glycosylation occurs cotranslationally and the complex associates with the Sec61 complex at the channel-forming translocon complex that mediates protein translocation across the endoplasmic reticulum (ER). All subunits are required for a maximal enzyme activity. Required for the assembly of both SST3A- and SS3B-containing OST complexes. This chain is Dolichyl-diphosphooligosaccharide--protein glycosyltransferase 48 kDa subunit, found in Rattus norvegicus (Rat).